The following is a 535-amino-acid chain: CTP synthase (535 aa).

The interval 1–268 (MKTKYIFVTG…DSLVCKKLEL (268 aa)) is amidoligase domain. S14 serves as a coordination point for CTP. S14 serves as a coordination point for UTP. 15–20 (SLGKGI) contributes to the ATP binding site. Y55 provides a ligand contact to L-glutamine. An ATP-binding site is contributed by D72. Positions 72 and 142 each coordinate Mg(2+). Residues 149–151 (DIE), 189–194 (KTKPTQ), and K225 each bind CTP. Residues 189–194 (KTKPTQ) and K225 each bind UTP. The 243-residue stretch at 293-535 (TIGLVGKYVE…IKVACTVKEK (243 aa)) folds into the Glutamine amidotransferase type-1 domain. G355 contributes to the L-glutamine binding site. Catalysis depends on C382, which acts as the Nucleophile; for glutamine hydrolysis. L-glutamine contacts are provided by residues 383–386 (LGMQ), E406, and R463. Catalysis depends on residues H508 and E510.

It belongs to the CTP synthase family. In terms of assembly, homotetramer.

The catalysed reaction is UTP + L-glutamine + ATP + H2O = CTP + L-glutamate + ADP + phosphate + 2 H(+). It catalyses the reaction L-glutamine + H2O = L-glutamate + NH4(+). The enzyme catalyses UTP + NH4(+) + ATP = CTP + ADP + phosphate + 2 H(+). Its pathway is pyrimidine metabolism; CTP biosynthesis via de novo pathway; CTP from UDP: step 2/2. Allosterically activated by GTP, when glutamine is the substrate; GTP has no effect on the reaction when ammonia is the substrate. The allosteric effector GTP functions by stabilizing the protein conformation that binds the tetrahedral intermediate(s) formed during glutamine hydrolysis. Inhibited by the product CTP, via allosteric rather than competitive inhibition. Its function is as follows. Catalyzes the ATP-dependent amination of UTP to CTP with either L-glutamine or ammonia as the source of nitrogen. Regulates intracellular CTP levels through interactions with the four ribonucleotide triphosphates. The sequence is that of CTP synthase from Clostridium acetobutylicum (strain ATCC 824 / DSM 792 / JCM 1419 / IAM 19013 / LMG 5710 / NBRC 13948 / NRRL B-527 / VKM B-1787 / 2291 / W).